Here is a 236-residue protein sequence, read N- to C-terminus: MRVTQLSSQSFIFPSPELALREPNGLLALGGDLTAPRLLAAYQRGIFPWFNPGEMILWWSPDPRAVLFPEDLHISRSMRRFIRHCPYRFTLNHAFADVISACATERDEGTWIGRDVQQAYCQLHALGHAHSLEVWLENELVGGLYGVAVGAVFCGESMFSRADNASKSALMVFCHHFTQHGGELIDCQVLNAHTASLGAVEIPRNFFLQQLSQLQFSPLPAECWLPQSLNFSSAMQ.

The protein belongs to the L/F-transferase family.

It localises to the cytoplasm. It carries out the reaction N-terminal L-lysyl-[protein] + L-leucyl-tRNA(Leu) = N-terminal L-leucyl-L-lysyl-[protein] + tRNA(Leu) + H(+). It catalyses the reaction N-terminal L-arginyl-[protein] + L-leucyl-tRNA(Leu) = N-terminal L-leucyl-L-arginyl-[protein] + tRNA(Leu) + H(+). The enzyme catalyses L-phenylalanyl-tRNA(Phe) + an N-terminal L-alpha-aminoacyl-[protein] = an N-terminal L-phenylalanyl-L-alpha-aminoacyl-[protein] + tRNA(Phe). Its function is as follows. Functions in the N-end rule pathway of protein degradation where it conjugates Leu, Phe and, less efficiently, Met from aminoacyl-tRNAs to the N-termini of proteins containing an N-terminal arginine or lysine. This chain is Leucyl/phenylalanyl-tRNA--protein transferase, found in Yersinia pseudotuberculosis serotype O:1b (strain IP 31758).